The following is a 413-amino-acid chain: von Willebrand factor A domain-containing protein 1 (413 aa).

Positions 1 to 20 (MLPWTVIGLALSLRLARSGA) are cleaved as a signal peptide. Positions 32 to 211 (DLLFLLDSSA…ALRGSILDAM (180 aa)) constitute a VWFA domain. A phosphoserine mark is found at Ser72, Ser78, and Ser91. 2 Fibronectin type-III domains span residues 212–302 (WPQQ…TLPE) and 305–395 (GPEL…TPEG). A glycan (N-linked (GlcNAc...) asparagine) is linked at Asn262. The tract at residues 385–413 (ALSAKACTPEGERSRAPRPQPQRTGGREP) is disordered.

As to quaternary structure, homodimer or homomultimer; disulfide-linked. Interacts with HSPG2. Post-translationally, N-glycosylated.

It localises to the secreted. Its subcellular location is the extracellular space. The protein resides in the extracellular matrix. The protein localises to the basement membrane. Functionally, promotes matrix assembly. Involved in the organization of skeletal muscles and in the formation of neuromuscular junctions. The sequence is that of von Willebrand factor A domain-containing protein 1 (VWA1) from Bos taurus (Bovine).